The following is a 359-amino-acid chain: Type-1 angiotensin II receptor A (359 aa).

At Met-1–Ser-25 the chain is on the extracellular side. Asn-4 is a glycosylation site (N-linked (GlcNAc...) asparagine). The angiotensin II site is built by Gln-15 and Asp-17. 2 cysteine pairs are disulfide-bonded: Cys-18–Cys-274 and Cys-101–Cys-180. A helical transmembrane segment spans residues Tyr-26–Phe-55. Residues Tyr-56–Thr-61 lie on the Cytoplasmic side of the membrane. The chain crosses the membrane as a helical span at residues Val-62–Ala-89. The Extracellular segment spans residues Met-90–Asn-98. The helical transmembrane segment at His-99–Asp-125 threads the bilayer. At Arg-126–Thr-141 the chain is on the cytoplasmic side. The helical transmembrane segment at Met-142 to Ile-165 threads the bilayer. The Extracellular segment spans residues His-166–Thr-190. Arg-167 lines the angiotensin II pocket. Asn-176 carries N-linked (GlcNAc...) asparagine glycosylation. Residues Phe-182, His-183, and Tyr-184 each coordinate angiotensin II. A glycan (N-linked (GlcNAc...) asparagine) is linked at Asn-188. The chain crosses the membrane as a helical span at residues Leu-191–Thr-216. Lys-199 lines the angiotensin II pocket. The Cytoplasmic segment spans residues Leu-217 to Phe-239. A helical membrane pass occupies residues Arg-240–Leu-268. Over Gly-269–Asp-278 the chain is Extracellular. Residues Ile-279–Phe-304 form a helical membrane-spanning segment. Over Leu-305 to Glu-359 the chain is Cytoplasmic. The segment covering Ser-335 to Ser-347 has biased composition (polar residues). A disordered region spans residues Ser-335–Glu-359. Cys-355 is lipidated: S-palmitoyl cysteine.

Belongs to the G-protein coupled receptor 1 family. In terms of assembly, interacts with MAS1. Interacts with ARRB1. Interacts with FLNA (via filamin repeat 21); increases PKA-mediated phosphorylation of FLNA. C-terminal Ser or Thr residues may be phosphorylated.

Its subcellular location is the cell membrane. In terms of biological role, receptor for angiotensin II, a vasoconstricting peptide, which acts as a key regulator of blood pressure and sodium retention by the kidney. The activated receptor in turn couples to G-alpha proteins G(q) (GNAQ, GNA11, GNA14 or GNA15) and thus activates phospholipase C and increases the cytosolic Ca(2+) concentrations, which in turn triggers cellular responses such as stimulation of protein kinase C. The sequence is that of Type-1 angiotensin II receptor A (Agtr1a) from Mus musculus (Mouse).